Reading from the N-terminus, the 396-residue chain is tRNA (guanine(9)-N1)-methyltransferase (396 aa).

2 stretches are compositionally biased toward basic and acidic residues: residues Met-1–Val-18 and Asp-52–Asp-73. The interval Met-1–Ala-109 is disordered. The SAM-dependent MTase TRM10-type domain maps to Thr-139–Lys-357. Residues Leu-264–Ser-265, Gly-284, Asp-288–His-292, Cys-296, Leu-310, and Gln-322–Leu-324 contribute to the S-adenosyl-L-methionine site. Asp-288 functions as the Proton acceptor in the catalytic mechanism. The disordered stretch occupies residues Lys-354–Glu-396. Over residues Lys-359–Val-374 the composition is skewed to basic and acidic residues.

The protein belongs to the class IV-like SAM-binding methyltransferase superfamily. TRM10 family. Monomer.

It is found in the cytoplasm. The protein resides in the nucleus. It catalyses the reaction guanosine(9) in tRNA + S-adenosyl-L-methionine = N(1)-methylguanosine(9) in tRNA + S-adenosyl-L-homocysteine + H(+). S-adenosyl-L-methionine-dependent guanine N(1)-methyltransferase that catalyzes the formation of N(1)-methylguanine at position 9 (m1G9) in cytoplasmic tRNA. The chain is tRNA (guanine(9)-N1)-methyltransferase from Aspergillus fumigatus (strain ATCC MYA-4609 / CBS 101355 / FGSC A1100 / Af293) (Neosartorya fumigata).